A 426-amino-acid chain; its full sequence is Riboflavin biosynthesis protein PYRD, chloroplastic (426 aa).

Residues 1–61 constitute a chloroplast transit peptide; it reads MQISCLPISI…SQTGFSNPVL (61 aa). The region spanning 72–194 is the CMP/dCMP-type deaminase domain; it reads VDDSFYMRKC…RLKDAGIDVT (123 aa). His121 serves as a coordination point for Zn(2+). The active-site Proton donor is Glu123. Positions 146 and 155 each coordinate Zn(2+).

Zn(2+) serves as cofactor.

Its subcellular location is the plastid. It is found in the chloroplast. The enzyme catalyses 2,5-diamino-6-hydroxy-4-(5-phosphoribosylamino)-pyrimidine + H2O + H(+) = 5-amino-6-(5-phospho-D-ribosylamino)uracil + NH4(+). Its pathway is cofactor biosynthesis; riboflavin biosynthesis; 5-amino-6-(D-ribitylamino)uracil from GTP: step 2/4. Its function is as follows. Monofunctional pyrimidine deaminase involved in the riboflavin biosynthesis pathway. Also has a reductase domain that lacks catalytically essential substrate-binding residues. This Arabidopsis thaliana (Mouse-ear cress) protein is Riboflavin biosynthesis protein PYRD, chloroplastic (PYRD).